A 20-amino-acid polypeptide reads, in one-letter code: Large ribosomal subunit protein uL10 (20 aa).

It belongs to the universal ribosomal protein uL10 family. In terms of assembly, part of the ribosomal stalk of the 50S ribosomal subunit. The N-terminus interacts with L11 and the large rRNA to form the base of the stalk. The C-terminus forms an elongated spine to which L12 dimers bind in a sequential fashion forming a multimeric L10(L12)X complex.

Functionally, forms part of the ribosomal stalk, playing a central role in the interaction of the ribosome with GTP-bound translation factors. The polypeptide is Large ribosomal subunit protein uL10 (rplJ) (Citrobacter freundii).